The sequence spans 1155 residues: PAN2-PAN3 deadenylation complex catalytic subunit pan2 (1155 aa).

WD repeat units follow at residues 102 to 145 (THED…DKLP) and 276 to 315 (ANVS…HFNE). Positions 316–452 (MSKEVEFADV…GTKLNGEAED (137 aa)) are linker. A USP domain is found at 453–822 (DPLLKYSNVE…VPCVLAYQVK (370 aa)). The Exonuclease domain maps to 871 to 1049 (VALDTEFVDL…IEDARMALRL (179 aa)). Positions 874, 876, 983, and 1042 each coordinate a divalent metal cation. Residues 1095 to 1155 (TAVTMQNNSG…GDFFGGSPLK (61 aa)) form a disordered region. Polar residues predominate over residues 1097-1106 (VTMQNNSGRN). A compositionally biased stretch (low complexity) spans 1107-1124 (TPSTPEVTAPTASAPTTP).

The protein belongs to the peptidase C19 family. PAN2 subfamily. Forms a heterotrimer with an asymmetric homodimer of the regulatory subunit pan3 to form the poly(A)-nuclease (PAN) deadenylation complex. The cofactor is a divalent metal cation.

The protein resides in the cytoplasm. The catalysed reaction is Exonucleolytic cleavage of poly(A) to 5'-AMP.. Positively regulated by the regulatory subunit pan3. Catalytic subunit of the poly(A)-nuclease (PAN) deadenylation complex, one of two cytoplasmic mRNA deadenylases involved in mRNA turnover. PAN specifically shortens poly(A) tails of RNA and the activity is stimulated by poly(A)-binding protein pab1. PAN deadenylation is followed by rapid degradation of the shortened mRNA tails by the CCR4-NOT complex. Deadenylated mRNAs are then degraded by two alternative mechanisms, namely exosome-mediated 3'-5' exonucleolytic degradation, or deadenylation-dependent mRNA decaping and subsequent 5'-3' exonucleolytic degradation by xrn1. May also be involved in post-transcriptional maturation of mRNA poly(A) tails. This is PAN2-PAN3 deadenylation complex catalytic subunit pan2 from Aspergillus oryzae (strain ATCC 42149 / RIB 40) (Yellow koji mold).